Reading from the N-terminus, the 116-residue chain is Beta-2-microglobulin (116 aa).

The signal sequence occupies residues Met-1–Gly-19. Residues Pro-24–Ser-111 form the Ig-like C1-type domain. An intrachain disulfide couples Cys-44 to Cys-99.

It belongs to the beta-2-microglobulin family. As to quaternary structure, heterodimer of an alpha chain and a beta chain. Beta-2-microglobulin is the beta-chain of major histocompatibility complex class I molecules.

It is found in the secreted. Component of the class I major histocompatibility complex (MHC). Involved in the presentation of peptide antigens to the immune system. The polypeptide is Beta-2-microglobulin (b2m) (Danio rerio (Zebrafish)).